A 371-amino-acid polypeptide reads, in one-letter code: Queuine tRNA-ribosyltransferase (371 aa).

The Proton acceptor role is filled by Asp-90. Residues 90 to 94, Asp-144, Gln-188, and Gly-215 contribute to the substrate site; that span reads DSGGF. Positions 246-252 are RNA binding; sequence GVGTPED. Residue Asp-265 is the Nucleophile of the active site. The segment at 270 to 274 is RNA binding; important for wobble base 34 recognition; it reads TRNAR. Cys-303, Cys-305, Cys-308, and His-334 together coordinate Zn(2+).

The protein belongs to the queuine tRNA-ribosyltransferase family. In terms of assembly, homodimer. Within each dimer, one monomer is responsible for RNA recognition and catalysis, while the other monomer binds to the replacement base PreQ1. Requires Zn(2+) as cofactor.

It catalyses the reaction 7-aminomethyl-7-carbaguanine + guanosine(34) in tRNA = 7-aminomethyl-7-carbaguanosine(34) in tRNA + guanine. It functions in the pathway tRNA modification; tRNA-queuosine biosynthesis. Functionally, catalyzes the base-exchange of a guanine (G) residue with the queuine precursor 7-aminomethyl-7-deazaguanine (PreQ1) at position 34 (anticodon wobble position) in tRNAs with GU(N) anticodons (tRNA-Asp, -Asn, -His and -Tyr). Catalysis occurs through a double-displacement mechanism. The nucleophile active site attacks the C1' of nucleotide 34 to detach the guanine base from the RNA, forming a covalent enzyme-RNA intermediate. The proton acceptor active site deprotonates the incoming PreQ1, allowing a nucleophilic attack on the C1' of the ribose to form the product. After dissociation, two additional enzymatic reactions on the tRNA convert PreQ1 to queuine (Q), resulting in the hypermodified nucleoside queuosine (7-(((4,5-cis-dihydroxy-2-cyclopenten-1-yl)amino)methyl)-7-deazaguanosine). The protein is Queuine tRNA-ribosyltransferase of Neisseria meningitidis serogroup A / serotype 4A (strain DSM 15465 / Z2491).